The sequence spans 255 residues: Glutamate racemase (255 aa).

Residues 7–8 (DS) and 39–40 (YG) each bind substrate. Cys70 acts as the Proton donor/acceptor in catalysis. 71 to 72 (NT) contacts substrate. Catalysis depends on Cys181, which acts as the Proton donor/acceptor. Position 182-183 (182-183 (TH)) interacts with substrate.

The protein belongs to the aspartate/glutamate racemases family.

The catalysed reaction is L-glutamate = D-glutamate. The protein operates within cell wall biogenesis; peptidoglycan biosynthesis. In terms of biological role, provides the (R)-glutamate required for cell wall biosynthesis. This is Glutamate racemase from Helicobacter pylori (strain G27).